We begin with the raw amino-acid sequence, 75 residues long: MLHNVSKCIHSICIRVCIKLHVICSSRFSIRCFAVYETYSLIPNTSDGRQAFLYAFYGKVHALVADAIRKGFRFG.

The polypeptide is Protein B7 (B7) (Human herpesvirus 6B (strain Z29) (HHV-6 variant B)).